The primary structure comprises 560 residues: Oxygen-dependent choline dehydrogenase (560 aa).

An FAD-binding site is contributed by 8–37 (DYIIIGAGSAGNVLATRLTEDADVSVLLLE). Histidine 475 acts as the Proton acceptor in catalysis.

The protein belongs to the GMC oxidoreductase family. Requires FAD as cofactor.

The enzyme catalyses choline + A = betaine aldehyde + AH2. It carries out the reaction betaine aldehyde + NAD(+) + H2O = glycine betaine + NADH + 2 H(+). It participates in amine and polyamine biosynthesis; betaine biosynthesis via choline pathway; betaine aldehyde from choline (cytochrome c reductase route): step 1/1. Involved in the biosynthesis of the osmoprotectant glycine betaine. Catalyzes the oxidation of choline to betaine aldehyde and betaine aldehyde to glycine betaine at the same rate. The chain is Oxygen-dependent choline dehydrogenase from Stenotrophomonas maltophilia (strain R551-3).